The following is an 81-amino-acid chain: 8.6 kDa transglutaminase substrate (81 aa).

Multimeric. Hemolymph; Hemocyte.

The sequence is that of 8.6 kDa transglutaminase substrate from Tachypleus tridentatus (Japanese horseshoe crab).